Consider the following 368-residue polypeptide: Protein pxr1 (368 aa).

2 disordered regions span residues 1–28 (MGLA…TDSF) and 161–339 (KEKA…PMGI). Residues 15 to 27 (DPNNTRWSGNTDS) show a composition bias toward polar residues. In terms of domain architecture, G-patch spans 25-79 (TDSFGHRMMKSQGWTPGEYLGAKDAAHAEFHTEANASHIRVVIKDNTLGLGAKIG). Residues 168–182 (SSEESDSSSDEEEEK) show a composition bias toward acidic residues. Basic residues-rich tracts occupy residues 209–226 (SKKS…KSKK), 242–254 (KSKK…KSKS), 271–283 (KARK…KKRK), and 301–312 (SSKKSKKDKHKS). Residues 313-324 (PSTSKTSTKEST) are compositionally biased toward low complexity. Residues 325 to 334 (PIVSESSGRS) show a composition bias toward polar residues.

The protein belongs to the PINX1 family.

Its subcellular location is the nucleus. The protein resides in the nucleolus. Its function is as follows. Involved in rRNA-processing at A0, A1 and A2 sites and negatively regulates telomerase. The protein is Protein pxr1 (pxr1) of Botryotinia fuckeliana (strain B05.10) (Noble rot fungus).